The primary structure comprises 501 residues: Type B diterpene cyclase (501 aa).

It belongs to the terpene synthase family. As to quaternary structure, monomer. Requires Mg(2+) as cofactor.

The enzyme catalyses geranylgeranyl diphosphate = tuberculosinyl diphosphate. With respect to regulation, strongly inhibited by 15-aza-dihydrogeranylgeraniol and 5-isopropyl-N,N,N,2-tetramethyl-4-(piperidine-1-carbonyloxy)benzenaminium chloride (Amo-1618). Inhibited by GGPP concentrations higher than 50 uM. In terms of biological role, catalyzes the formation of tuberculosinyl diphosphate from geranylgeranyl diphosphate (GGPP). It could also react with (14R/S)-14,15-oxidoGGPP to generate 3alpha- and 3beta-hydroxytuberculosinyl diphosphate. The chain is Type B diterpene cyclase from Mycobacterium tuberculosis (strain ATCC 25618 / H37Rv).